A 174-amino-acid chain; its full sequence is MSESESASHEMREPYLEKVVVHMGVGQGGEPLADAEEIIEEITDQQSVRTTSKRTIAEFGIRKGDPIGVKVTLRGEDAHAFLDTALELADISKSQFDDTGNLSFGVEDHTDFPSQEYDPNIGIYGLDVTTTIVRPGYRVSKRDKATASIPSKHRMTAEDATAFLETNFDVEVTE.

The protein belongs to the universal ribosomal protein uL5 family. As to quaternary structure, part of the 50S ribosomal subunit; contacts the 5S rRNA and probably tRNA. Forms a bridge to the 30S subunit in the 70S ribosome.

Its function is as follows. This is one of the proteins that bind and probably mediate the attachment of the 5S RNA into the large ribosomal subunit, where it forms part of the central protuberance. In the 70S ribosome it contacts protein S13 of the 30S subunit (bridge B1b), connecting the 2 subunits; this bridge is implicated in subunit movement. May contact the P site tRNA; the 5S rRNA and some of its associated proteins might help stabilize positioning of ribosome-bound tRNAs. In Halorubrum lacusprofundi (strain ATCC 49239 / DSM 5036 / JCM 8891 / ACAM 34), this protein is Large ribosomal subunit protein uL5.